We begin with the raw amino-acid sequence, 394 residues long: Probable aspartate/prephenate aminotransferase (394 aa).

3 residues coordinate L-aspartate: glycine 40, tryptophan 126, and asparagine 176. Lysine 239 is subject to N6-(pyridoxal phosphate)lysine. Residue arginine 370 participates in L-aspartate binding.

The protein belongs to the class-I pyridoxal-phosphate-dependent aminotransferase family. As to quaternary structure, homodimer. The cofactor is pyridoxal 5'-phosphate.

Its subcellular location is the cytoplasm. It carries out the reaction L-aspartate + 2-oxoglutarate = oxaloacetate + L-glutamate. The catalysed reaction is L-arogenate + oxaloacetate = prephenate + L-aspartate. In terms of biological role, catalyzes the reversible conversion of aspartate and 2-oxoglutarate to glutamate and oxaloacetate. Can also transaminate prephenate in the presence of aspartate. In Aquifex aeolicus (strain VF5), this protein is Probable aspartate/prephenate aminotransferase (aspC).